The sequence spans 135 residues: Large ribosomal subunit protein bL17 (135 aa).

Belongs to the bacterial ribosomal protein bL17 family. As to quaternary structure, part of the 50S ribosomal subunit. Contacts protein L32.

This Listeria monocytogenes serotype 4b (strain CLIP80459) protein is Large ribosomal subunit protein bL17.